Here is a 590-residue protein sequence, read N- to C-terminus: MADRQDAERSGAGPARQSVPVASLVAEFLQEHGVDRVFGLQGGHIQPIWDQLARRGVRIVDVRDEGSAVHMAHAHTELTGQTAVAMVTAGPGVTNTVTAVANASVSRIPLLVIGGCPPIPQSNMGPLQDIPHTAILEPITRLARTLRSADQVLREFDEAWARASGDRGEPGPVYLEIPTDVLRRDVPPALQMREHLRAKPKRRPQPHPDDVAAVADLIRAAEKPAIISGRGARTTDGTDLVRLLDASGAAYLDTQESRGLVPDSHPAAVGSARSAVMRDTDLLITVGRQLDYQLGMGSPAVFPHAKVVRIADTASELIDNRRGEVEILAEPGAALAAIADALKDHTPDTSWRDELKAKHRKRAEDYRQALHSTENGADGHIHPNRIFGALDALDGDVLDLGETIMIADGGDLLSFGRLGITKARRYLDAGAFGCLGVATPFAIGAALAYPDRPVVAVTGDGAFGITATEIDTAVRHDAKIVVIVSNNRAWNIERYDQAENYGLVVGTDLADSDYAGVARAFGAHGERVTDPAELEGAIRRALANAPALVDVVTTQDAASPDSGKGLGFVPDYQALTPWNDAEVARRQEGI.

2-hydroxyisobutanoyl-CoA is bound by residues Gly-43, Gln-128, Gln-255, 273–274 (RS), and Arg-362. 410-412 (GDL) is a thiamine diphosphate binding site. Position 417 (Arg-417) interacts with 2-hydroxyisobutanoyl-CoA. Gly-433 contributes to the thiamine diphosphate binding site. Residue Asp-460 participates in Mg(2+) binding. Thiamine diphosphate-binding positions include 461–462 (GA) and 487–492 (NRAWNI). Mg(2+) is bound by residues Asn-487 and Ala-489. Residue Glu-493 is the Proton acceptor of the active site. 2-hydroxyisobutanoyl-CoA is bound at residue 561 to 564 (DSGK). Residues 566–590 (LGFVPDYQALTPWNDAEVARRQEGI) are C-terminal lid.

Belongs to the TPP enzyme family. As to quaternary structure, a homotetramer formed by a dimer of dimers; active sites are located in the dimer interface. Mg(2+) serves as cofactor. Requires thiamine diphosphate as cofactor.

The catalysed reaction is 2-hydroxyisobutanoyl-CoA = formyl-CoA + acetone. Activity is stimulated by thiamine diphosphate. Functionally, a lyase that reversibly degrades 2-hydroxyisobutyryl-CoA (2-HIB-CoA) to acetone and formyl-CoA. Probably also cleaves 2-hydroxy-2-methylbutyryl-CoA to butanone and formyl-CoA. Does not act on 2-hydroxy-2-ethylbutyryl-CoA. A C-terminal lid closes the active site upon substrate binding, and with residues Leu-127 and Ile-492 restricts the size of the active site cavity so it can only use short-chain (C4 and C5) acyl substrates. Part of a pathway that allows cells to grow on 2-methylpropane-1,2-diol or 2-hydroxyisobutyric acid (2-HIBA) as a sole carbon source. The chain is 2-hydroxyacyl-CoA lyase from Actinomycetospora chiangmaiensis (strain DSM 45062 / JCM 15998 / CCTCC AA 205017 / NBRC 104400 / YIM 0006).